Here is a 530-residue protein sequence, read N- to C-terminus: Membrane protein insertase YidC (530 aa).

4 helical membrane-spanning segments follow: residues 5–25, 348–368, 418–438, and 492–512; these read VVIAVILSIVVLYAFSYMFPP, YGLAIIIITIILKVLFFPLTH, LPMLVQIPVFFALYKALMFSI, and PVVFTFMFLNFPAGLVLYWLI.

Belongs to the OXA1/ALB3/YidC family. Type 1 subfamily. In terms of assembly, interacts with the Sec translocase complex via SecD. Specifically interacts with transmembrane segments of nascent integral membrane proteins during membrane integration.

Its subcellular location is the cell inner membrane. Required for the insertion and/or proper folding and/or complex formation of integral membrane proteins into the membrane. Involved in integration of membrane proteins that insert both dependently and independently of the Sec translocase complex, as well as at least some lipoproteins. Aids folding of multispanning membrane proteins. The protein is Membrane protein insertase YidC of Geotalea daltonii (strain DSM 22248 / JCM 15807 / FRC-32) (Geobacter daltonii).